A 496-amino-acid chain; its full sequence is GTPase Der (496 aa).

EngA-type G domains lie at 3–166 (PVVA…FDNL) and 208–381 (IKLA…RSAT). Residues 9–16 (GRPNVGKS), 56–60 (DTGGI), 118–121 (NKVD), 214–221 (GRPNVGKS), 261–265 (DTAGV), and 326–329 (NKWD) contribute to the GTP site. In terms of domain architecture, KH-like spans 382 to 466 (TRVGTSVLTR…PIRIQFQNSD (85 aa)).

It belongs to the TRAFAC class TrmE-Era-EngA-EngB-Septin-like GTPase superfamily. EngA (Der) GTPase family. As to quaternary structure, associates with the 50S ribosomal subunit.

In terms of biological role, GTPase that plays an essential role in the late steps of ribosome biogenesis. This Vibrio vulnificus (strain CMCP6) protein is GTPase Der.